The sequence spans 348 residues: Nuclear receptor subfamily 1 group I member 3 (348 aa).

Residues 8 to 83 (PRSCMVCGDR…AGMKKEMILS (76 aa)) constitute a DNA-binding region (nuclear receptor). An NR C4-type zinc finger spans residues 11–31 (CMVCGDRATGYHFHALTCEGC). Threonine 38 bears the Phosphothreonine; by PKC mark. The segment at 47-71 (CPFAGNCKVNKAQRRHCPACRLQKC) adopts an NR C4-type zinc-finger fold. Residues 109–348 (GQQELVQTLL…MMPLLQEICS (240 aa)) form the NR LBD domain.

The protein belongs to the nuclear hormone receptor family. NR1 subfamily. As to quaternary structure, heterodimer of NR1I3 and RXR. Interacts with PSMC4. Interacts with ECT2. Directly interacts with DNAJC7; this complex may also include HSP90. Interacts with CRY1. Interacts with CRY2 in a ligand-dependent manner. In terms of processing, phosphorylated at Thr-38 by PKC, dephosphorylation of Thr-38 is required for nuclear translocation and activation.

It is found in the nucleus. It localises to the cytoplasm. The protein resides in the cytoskeleton. In terms of biological role, binds and transactivates the retinoic acid response elements that control expression of the retinoic acid receptor beta 2 and alcohol dehydrogenase 3 genes. Transactivates both the phenobarbital responsive element module of the human CYP2B6 gene and the CYP3A4 xenobiotic response element. The polypeptide is Nuclear receptor subfamily 1 group I member 3 (NR1I3) (Callorhinus ursinus (Northern fur seal)).